The chain runs to 96 residues: UPF0235 protein VC_0458 (96 aa).

It belongs to the UPF0235 family.

This Vibrio cholerae serotype O1 (strain ATCC 39315 / El Tor Inaba N16961) protein is UPF0235 protein VC_0458.